A 473-amino-acid chain; its full sequence is H(+)/Cl(-) exchange transporter ClcA (473 aa).

At 1–32 the chain is on the cytoplasmic side; sequence MKTDTSTFLAQQIVRLRRRDQIRRLMQRDKTP. The chain crosses the membrane as a helical span at residues 33–69; it reads LAILFMAAVVGTLTGLVGVAFEKAVSWVQNMRIGALV. Topologically, residues 70–76 are periplasmic; that stretch reads QVADHAF. Residues 77 to 100 traverse the membrane as a helical segment; that stretch reads LLWPLAFILSALLAMVGYFLVRKF. The short motif at 106–110 is the Selectivity filter part_1 element; the sequence is GSGIP. S107 contacts chloride. The helical intramembrane region spans 109 to 116; sequence IPEIEGAL. The Cytoplasmic segment spans residues 117–123; the sequence is EELRPVR. Helical transmembrane passes span 124–141 and 148–166; these read WWRVLPVKFIGGMGTLGA and EGPTVQIGGNLGRMVLDVF. A Selectivity filter part_2 motif is present at residues 146–150; sequence GREGP. The Cytoplasmic segment spans residues 167–176; the sequence is RMRSAEARHT. 2 consecutive intramembrane regions (helical) follow at residues 177 to 189 and 193 to 201; these read LLATGAAAGLSAA and PLAGILFII. The Cytoplasmic segment spans residues 202-214; it reads EEMRPQFRYNLIS. Residues 215 to 232 form a helical membrane-spanning segment; that stretch reads IKAVFTGVIMSSIVFRIF. Residues 233 to 252 lie on the Periplasmic side of the membrane; it reads NGEAPIIEVGKLSDAPVNTL. Residues 253 to 281 form a helical membrane-spanning segment; that stretch reads WLYLILGIIFGCVGPVFNSLVLRTQDMFQ. Residues 282–287 lie on the Cytoplasmic side of the membrane; that stretch reads RFHGGE. Residues 288-309 traverse the membrane as a helical segment; it reads IKKWVLMGGAIGGLCGILGLIE. Residues 310–329 are Periplasmic-facing; sequence PEAAGGGFNLIPIAAAGNFS. Transmembrane regions (helical) follow at residues 330–349 and 355–376; these read VGLLLFIFIARVVTTLLCFS and GIFAPMLALGTLLGTAFGMAAA. Positions 355–359 match the Selectivity filter part_3 motif; the sequence is GIFAP. 2 residues coordinate chloride: I356 and F357. Topologically, residues 377 to 386 are periplasmic; sequence VLFPQYHLEA. The segment at residues 387 to 401 is an intramembrane region (helical); it reads GTFAIAGMGALMAAS. The note=Loop between two helices intramembrane region spans 402–404; that stretch reads VRA. Residues 405–416 constitute an intramembrane region (helical); it reads PLTGIVLVLEMT. Positions 417-421 form an intramembrane region, note=Loop between two helices; the sequence is DNYQL. Residues 422 to 438 form a helical membrane-spanning segment; that stretch reads ILPMIITCLGATLLAQF. At 439 to 473 the chain is on the cytoplasmic side; that stretch reads LGGKPLYSTILARTLAKQDAEQAAKSQNAPAGENT. Y445 is a binding site for chloride.

The protein belongs to the chloride channel (TC 2.A.49) family. ClcA subfamily. In terms of assembly, homodimer.

Its subcellular location is the cell inner membrane. The enzyme catalyses 2 chloride(in) + H(+)(out) = 2 chloride(out) + H(+)(in). Proton-coupled chloride transporter. Functions as antiport system and exchanges two chloride ions for 1 proton. Probably acts as an electrical shunt for an outwardly-directed proton pump that is linked to amino acid decarboxylation, as part of the extreme acid resistance (XAR) response. This chain is H(+)/Cl(-) exchange transporter ClcA, found in Salmonella gallinarum (strain 287/91 / NCTC 13346).